Here is a 192-residue protein sequence, read N- to C-terminus: dTTP/UTP pyrophosphatase (192 aa).

Aspartate 70 functions as the Proton acceptor in the catalytic mechanism.

Belongs to the Maf family. YhdE subfamily. A divalent metal cation serves as cofactor.

The protein localises to the cytoplasm. The catalysed reaction is dTTP + H2O = dTMP + diphosphate + H(+). The enzyme catalyses UTP + H2O = UMP + diphosphate + H(+). Functionally, nucleoside triphosphate pyrophosphatase that hydrolyzes dTTP and UTP. May have a dual role in cell division arrest and in preventing the incorporation of modified nucleotides into cellular nucleic acids. The polypeptide is dTTP/UTP pyrophosphatase (Clostridium perfringens (strain ATCC 13124 / DSM 756 / JCM 1290 / NCIMB 6125 / NCTC 8237 / Type A)).